A 199-amino-acid polypeptide reads, in one-letter code: Small ribosomal subunit protein uS4 (199 aa).

An S4 RNA-binding domain is found at 91–154; it reads SRLDNLVYRM…RGLQLIKDAL (64 aa).

It belongs to the universal ribosomal protein uS4 family. In terms of assembly, part of the 30S ribosomal subunit. Contacts protein S5. The interaction surface between S4 and S5 is involved in control of translational fidelity.

Functionally, one of the primary rRNA binding proteins, it binds directly to 16S rRNA where it nucleates assembly of the body of the 30S subunit. In terms of biological role, with S5 and S12 plays an important role in translational accuracy. This is Small ribosomal subunit protein uS4 from Brevibacillus brevis (strain 47 / JCM 6285 / NBRC 100599).